Here is a 251-residue protein sequence, read N- to C-terminus: Sugar fermentation stimulation protein homolog (251 aa).

It belongs to the SfsA family.

The polypeptide is Sugar fermentation stimulation protein homolog (Prochlorococcus marinus (strain MIT 9313)).